Consider the following 545-residue polypeptide: Chaperonin GroEL 1 (545 aa).

Residues 29–32 (TLGP), 86–90 (DGTTT), glycine 413, 479–481 (DAA), and aspartate 495 contribute to the ATP site. The segment at 525–545 (PEPKENNPAGSGAGMGGDFDY) is disordered. Gly residues predominate over residues 535 to 545 (SGAGMGGDFDY).

The protein belongs to the chaperonin (HSP60) family. In terms of assembly, forms a cylinder of 14 subunits composed of two heptameric rings stacked back-to-back. Interacts with the co-chaperonin GroES.

The protein resides in the cytoplasm. It carries out the reaction ATP + H2O + a folded polypeptide = ADP + phosphate + an unfolded polypeptide.. Functionally, together with its co-chaperonin GroES, plays an essential role in assisting protein folding. The GroEL-GroES system forms a nano-cage that allows encapsulation of the non-native substrate proteins and provides a physical environment optimized to promote and accelerate protein folding. This chain is Chaperonin GroEL 1, found in Thermosynechococcus vestitus (strain NIES-2133 / IAM M-273 / BP-1).